The chain runs to 84 residues: Esculentin-1B (84 aa).

An N-terminal signal peptide occupies residues 1–22 (MFTLKKPLLLIVLLGMISLSLC). A propeptide spanning residues 23 to 38 (EQERNADEEEGSEIKR) is cleaved from the precursor. The cysteines at positions 78 and 84 are disulfide-linked.

Belongs to the frog skin active peptide (FSAP) family. Brevinin subfamily. As to expression, expressed by the skin glands.

It is found in the secreted. Shows antibacterial activity against representative Gram-negative and Gram-positive bacterial species, and hemolytic activity. This is Esculentin-1B from Pelophylax lessonae (Pool frog).